A 786-amino-acid polypeptide reads, in one-letter code: m7GpppN-mRNA hydrolase dcap-2 (786 aa).

The segment covering 25 to 61 has biased composition (polar residues); it reads QKQNKSTEEPPSSVQKLLASLQQAQNKSDLSEQPSTS. Residues 25–148 form a disordered region; the sequence is QKQNKSTEEP…QQQQQYKGPR (124 aa). Positions 62 to 72 are enriched in basic residues; that stretch reads KPKKNEKRKKA. Polar residues-rich tracts occupy residues 101 to 111 and 118 to 133; these read MQQQAENARIS and QVST…TAPE. The span at 134-144 shows a compositional bias: low complexity; sequence QQNYQQQQQQY. The region spanning 238–366 is the Nudix hydrolase domain; it reads STVPTYGAIL…LPAYLQGNKF (129 aa). Residues 273-294 carry the Nudix box motif; the sequence is GKINQAEPPRDAAIRETFEETG. Glutamate 288 and glutamate 292 together coordinate Mg(2+). 2 disordered regions span residues 556–576 and 623–655; these read IMHS…TPTA and ISST…SSQV. 2 stretches are compositionally biased toward polar residues: residues 623-632 and 646-655; these read ISSTQKQSIP and SASLSGSSQV.

This sequence belongs to the Nudix hydrolase family. DCP2 subfamily. As to quaternary structure, may be a component of the decapping complex composed of dcap-1 and dcap-2. Mg(2+) serves as cofactor. It depends on Mn(2+) as a cofactor. As to expression, expressed in sensory neurons.

The protein resides in the cytoplasmic granule. The protein localises to the cytoplasm. It is found in the perinuclear region. It carries out the reaction a 5'-end (N(7)-methyl 5'-triphosphoguanosine)-ribonucleoside in mRNA + H2O = N(7)-methyl-GDP + a 5'-end phospho-ribonucleoside in mRNA + 2 H(+). It catalyses the reaction a 5'-end (N(2),N(2),N(7)-trimethyl 5'-triphosphoguanosine)-ribonucleoside in mRNA + H2O = N(2),N(2),N(7)-trimethyl-GDP + a 5'-end phospho-ribonucleoside in mRNA + 2 H(+). Inhibited by capped and uncapped RNA. Not inhibited by dinucleotide cap or methylated nucleotide analogs. Its function is as follows. Decapping metalloenzyme that catalyzes the cleavage of the cap structure on mRNAs. Removes the 7-methyl guanine cap structure from mRNA molecules, yielding a 5'-phosphorylated mRNA fragment and 7m-GDP. RNA-decapping enzyme although it does not bind the RNA cap. May contribute to gene regulation in multiple RNA pathways including monomethylguanosine- and trimethylguanosine-capped RNAs. In oocytes, may play a role in the response to stress induced by heat shock, osmotic stress and anoxia. Required for the developmental axon guidance and regrowth of PLM touch receptor neurons. Early in embryogenesis, plays a role in ciliary shape formation in sensory neurons. Promotes survival at high temperatures. This Caenorhabditis elegans protein is m7GpppN-mRNA hydrolase dcap-2.